We begin with the raw amino-acid sequence, 344 residues long: Uroporphyrinogen decarboxylase (344 aa).

Substrate is bound by residues 26-30 (RQAGR), Phe-45, Asp-75, Tyr-151, Ser-206, and His-320.

The protein belongs to the uroporphyrinogen decarboxylase family. As to quaternary structure, homodimer.

Its subcellular location is the cytoplasm. It carries out the reaction uroporphyrinogen III + 4 H(+) = coproporphyrinogen III + 4 CO2. The protein operates within porphyrin-containing compound metabolism; protoporphyrin-IX biosynthesis; coproporphyrinogen-III from 5-aminolevulinate: step 4/4. Functionally, catalyzes the decarboxylation of four acetate groups of uroporphyrinogen-III to yield coproporphyrinogen-III. This chain is Uroporphyrinogen decarboxylase, found in Staphylococcus epidermidis (strain ATCC 35984 / DSM 28319 / BCRC 17069 / CCUG 31568 / BM 3577 / RP62A).